Consider the following 465-residue polypeptide: Casein kinase 1-like protein 2 (465 aa).

In terms of domain architecture, Protein kinase spans phenylalanine 9 to isoleucine 277. ATP is bound by residues isoleucine 15–isoleucine 23 and lysine 38. Aspartate 128 (proton acceptor) is an active-site residue. 2 disordered regions span residues serine 300–arginine 344 and arginine 396–asparagine 428. A compositionally biased stretch (polar residues) spans serine 405–asparagine 428.

It belongs to the protein kinase superfamily. CK1 Ser/Thr protein kinase family. Casein kinase I subfamily. Monomer. In terms of processing, autophosphorylated.

The protein resides in the cytoplasm. It localises to the nucleus. It carries out the reaction L-seryl-[protein] + ATP = O-phospho-L-seryl-[protein] + ADP + H(+). It catalyses the reaction L-threonyl-[protein] + ATP = O-phospho-L-threonyl-[protein] + ADP + H(+). Functionally, casein kinases are operationally defined by their preferential utilization of acidic proteins such as caseins as substrates. It can phosphorylate a large number of proteins. This Arabidopsis thaliana (Mouse-ear cress) protein is Casein kinase 1-like protein 2.